Here is a 358-residue protein sequence, read N- to C-terminus: RNA demethylase ALKBH5 (358 aa).

Residues 1–50 form a disordered region; that stretch reads MSATYTDLREKLQSLYRDSPKEVRKRKQPTSDTEEEEAASEPEEEEEARK. A compositionally biased stretch (basic and acidic residues) spans 7-22; that stretch reads DLREKLQSLYRDSPKE. Residues 32–46 are compositionally biased toward acidic residues; the sequence is DTEEEEAASEPEEEE. The active site involves Tyr-105. 2-oxoglutarate-binding residues include Asn-159, Tyr-161, His-170, His-232, and Arg-243. An intrachain disulfide couples Cys-196 to Cys-233. 2 disordered regions span residues 259-312 and 334-358; these read EMKS…RRSV and DYVD…MRRH. A compositionally biased stretch (polar residues) spans 262–278; the sequence is SLSSSYQPERLQGSNRQ. A compositionally biased stretch (basic residues) spans 279-288; it reads HILKPKRSHR. Positions 289–310 are enriched in basic and acidic residues; that stretch reads KADPDAAHRPRILEMDKEENRR.

It belongs to the alkB family. In terms of assembly, monomer. Fe(2+) is required as a cofactor.

The protein localises to the nucleus speckle. It catalyses the reaction an N(6)-methyladenosine in mRNA + 2-oxoglutarate + O2 = an adenosine in mRNA + formaldehyde + succinate + CO2. Its function is as follows. Dioxygenase that specifically demethylates N(6)-methyladenosine (m6A) RNA, the most prevalent internal modification of messenger RNA (mRNA) in higher eukaryotes. Demethylates RNA by oxidative demethylation, which requires molecular oxygen, alpha-ketoglutarate and iron. Demethylation of m6A mRNA affects mRNA processing, translation and export. The sequence is that of RNA demethylase ALKBH5 (alkbh5) from Xenopus tropicalis (Western clawed frog).